Consider the following 71-residue polypeptide: Palustrin-2AJ2 (71 aa).

A signal peptide spans 1-22; that stretch reads MFTLKKPLLVLLFLGTVSLSLC. Residues 23–40 constitute a propeptide that is removed on maturation; the sequence is EQERAADDDEGEVIEEEV. C65 and C71 are oxidised to a cystine.

As to expression, expressed by the skin glands.

The protein localises to the secreted. Displays broad-spectrum antibacterial activity against a range of Gram-positive and Gram-negative bacteria. Has low hemolytic activity, low cytotoxicity and low antioxidant activity. The chain is Palustrin-2AJ2 from Amolops jingdongensis (Chinese torrent frog).